The following is a 106-amino-acid chain: MKTPLPPVLRAALYRRAVACAWLTVCERQHRYPHLTLESLEAAIAAELEGFYLRQHGEEKGRQIACALLEDLMESGPLKAAPSLSFLGLVVMDELCARHIKAPVLH.

This is P4 prophage-derived uncharacterized protein t2655 from Salmonella typhi.